The chain runs to 174 residues: Crossover junction endodeoxyribonuclease RuvC (174 aa).

Active-site residues include D8, E67, and D139. 3 residues coordinate Mg(2+): D8, E67, and D139.

This sequence belongs to the RuvC family. Homodimer which binds Holliday junction (HJ) DNA. The HJ becomes 2-fold symmetrical on binding to RuvC with unstacked arms; it has a different conformation from HJ DNA in complex with RuvA. In the full resolvosome a probable DNA-RuvA(4)-RuvB(12)-RuvC(2) complex forms which resolves the HJ. Requires Mg(2+) as cofactor.

It is found in the cytoplasm. The enzyme catalyses Endonucleolytic cleavage at a junction such as a reciprocal single-stranded crossover between two homologous DNA duplexes (Holliday junction).. Its function is as follows. The RuvA-RuvB-RuvC complex processes Holliday junction (HJ) DNA during genetic recombination and DNA repair. Endonuclease that resolves HJ intermediates. Cleaves cruciform DNA by making single-stranded nicks across the HJ at symmetrical positions within the homologous arms, yielding a 5'-phosphate and a 3'-hydroxyl group; requires a central core of homology in the junction. The consensus cleavage sequence is 5'-(A/T)TT(C/G)-3'. Cleavage occurs on the 3'-side of the TT dinucleotide at the point of strand exchange. HJ branch migration catalyzed by RuvA-RuvB allows RuvC to scan DNA until it finds its consensus sequence, where it cleaves and resolves the cruciform DNA. In Pseudomonas syringae pv. syringae (strain B728a), this protein is Crossover junction endodeoxyribonuclease RuvC.